A 340-amino-acid polypeptide reads, in one-letter code: Inactive hyaluronidase B (340 aa).

Cystine bridges form between cysteine 21–cysteine 310 and cysteine 187–cysteine 199. 2 N-linked (GlcNAc...) asparagine glycosylation sites follow: asparagine 66 and asparagine 81.

The protein belongs to the glycosyl hydrolase 56 family. N-glycosylated on at least two Asn residues by identical heptasaccharide units composed of Man, GlcNAc, and Fuc residues in the molar ration of 3:2:2. In terms of tissue distribution, expressed by the venom gland.

It is found in the secreted. Functionally, has no hyaluronidase activity. The chain is Inactive hyaluronidase B from Vespula vulgaris (Yellow jacket).